Reading from the N-terminus, the 600-residue chain is MYYTEESLETLKHSIDIVSVLGEYVHLKRSGADYKACCPFHDEKTPSFIVYPTRGHYHCYGCGEHGDAINFLMKQQGYSFSEAVLFLAKKFHVDLVIKTKTKESSGQDSKECLRRINKEAERFFQYCLLCLPEGGEALSYLYKRGFSLDTIDRFQIGYAPEQRVFVRAMEERGISVKQLEWAGYLSKDWFLFAQRIMFPIQDSLGYTIGFSSRRFKEGGKGGKYINSPETLLFKKSRVLYGLQFSRKRIAKEKRVILVEGQADCLQMIDFGFNCTLAAQGTSFTETHVKELVKLGVSKAYLLFDGDAAGEKASLRVGDLCQVAGIAVIVCRLPSGQDPDSFLMQRGPEELRELLDRGEDYLSFLVWHKIRSYEQFTPREKARVVEEVIQQVQHWGSPIMIHEYLRQLASLVKVPEAAVLSYLSSIKSATEDKGKKADAKEVCPDPEATAVAYKGGKASKKISPRMILEADVIRCLLFAKPEEEFVPATVRHYLSPEEFHCIEYRSIFVMAMNHYNEKHMLPSMDDMMALVWGTEAMTLLVDRRINTELMRDIVVQAIQKLLDKHWRDRKRNFCHQMGKELDSLQEYVRLSEERIKVSLVS.

The segment at 38 to 62 (CPFHDEKTPSFIVYPTRGHYHCYGC) adopts a CHC2-type zinc-finger fold. Positions 253-333 (KRVILVEGQA…GIAVIVCRLP (81 aa)) constitute a Toprim domain. The Mg(2+) site is built by Glu259, Asp304, and Asp306.

It belongs to the DnaG primase family. Monomer. Interacts with DnaB. Zn(2+) is required as a cofactor. It depends on Mg(2+) as a cofactor.

The catalysed reaction is ssDNA + n NTP = ssDNA/pppN(pN)n-1 hybrid + (n-1) diphosphate.. Its function is as follows. RNA polymerase that catalyzes the synthesis of short RNA molecules used as primers for DNA polymerase during DNA replication. The chain is DNA primase from Chlamydia muridarum (strain MoPn / Nigg).